Consider the following 246-residue polypeptide: Putative L,D-transpeptidase YafK (246 aa).

An N-terminal signal peptide occupies residues 1 to 19 (MRKIALILAMLLIPCVSFA). Positions 44-174 (VYIQIFKEER…GQPSVQVSIY (131 aa)) constitute a L,D-TPase catalytic domain. Histidine 135 functions as the Proton donor/acceptor in the catalytic mechanism. The Nucleophile role is filled by cysteine 143.

The protein belongs to the YkuD family.

It participates in cell wall biogenesis; peptidoglycan biosynthesis. This is Putative L,D-transpeptidase YafK (yafK) from Escherichia coli O157:H7.